Consider the following 366-residue polypeptide: Small ribosomal subunit biogenesis GTPase RsgA (366 aa).

The CP-type G domain occupies 107-266 (RSEGQILAAN…LIDTPGLRGV (160 aa)). GTP is bound by residues 154 to 157 (TKAD) and 208 to 216 (GQSGAGKST). Residues Cys-289, Cys-294, His-296, and Cys-302 each contribute to the Zn(2+) site.

Belongs to the TRAFAC class YlqF/YawG GTPase family. RsgA subfamily. As to quaternary structure, monomer. Associates with 30S ribosomal subunit, binds 16S rRNA. It depends on Zn(2+) as a cofactor.

It is found in the cytoplasm. One of several proteins that assist in the late maturation steps of the functional core of the 30S ribosomal subunit. Helps release RbfA from mature subunits. May play a role in the assembly of ribosomal proteins into the subunit. Circularly permuted GTPase that catalyzes slow GTP hydrolysis, GTPase activity is stimulated by the 30S ribosomal subunit. The sequence is that of Small ribosomal subunit biogenesis GTPase RsgA from Streptomyces coelicolor (strain ATCC BAA-471 / A3(2) / M145).